The primary structure comprises 393 residues: Pyrimidine monooxygenase RutA (393 aa).

FMN contacts are provided by residues 79 to 80 (IK), Asn-145, Glu-154, 170 to 171 (RY), and Ser-220.

Belongs to the NtaA/SnaA/DszA monooxygenase family. RutA subfamily.

The enzyme catalyses uracil + FMNH2 + NADH + O2 = (Z)-3-ureidoacrylate + FMN + NAD(+) + H2O + H(+). It carries out the reaction thymine + FMNH2 + NADH + O2 = (Z)-2-methylureidoacrylate + FMN + NAD(+) + H2O + H(+). In terms of biological role, catalyzes the pyrimidine ring opening between N-3 and C-4 by an unusual flavin hydroperoxide-catalyzed mechanism, adding oxygen atoms in the process to yield ureidoacrylate peracid, that immediately reacts with FMN forming ureidoacrylate and FMN-N(5)-oxide. The FMN-N(5)-oxide reacts spontaneously with NADH to produce FMN. Requires the flavin reductase RutF to regenerate FMN in vivo. The protein is Pyrimidine monooxygenase RutA of Escherichia coli O9:H4 (strain HS).